The chain runs to 495 residues: NADH-ubiquinone oxidoreductase chain 4 (495 aa).

15 helical membrane passes run Tyr9 to Ile29, Leu39 to Phe59, Leu89 to Trp109, Glu118 to Asp138, Leu139 to Val159, Phe173 to Leu193, Ile214 to His234, Pro245 to Leu265, Phe272 to Ile292, Val313 to Gly333, Ile335 to Leu355, Tyr367 to Ala387, Asn388 to Phe408, Leu413 to Tyr433, and Val457 to Phe477.

It belongs to the complex I subunit 4 family.

It is found in the mitochondrion membrane. It carries out the reaction a ubiquinone + NADH + 5 H(+)(in) = a ubiquinol + NAD(+) + 4 H(+)(out). Its function is as follows. Core subunit of the mitochondrial membrane respiratory chain NADH dehydrogenase (Complex I) that is believed to belong to the minimal assembly required for catalysis. Complex I functions in the transfer of electrons from NADH to the respiratory chain. The immediate electron acceptor for the enzyme is believed to be ubiquinone. This Triticum aestivum (Wheat) protein is NADH-ubiquinone oxidoreductase chain 4 (ND4).